The sequence spans 872 residues: DNA mismatch repair protein MutS (872 aa).

622-629 (GPNMAGKS) is an ATP binding site.

The protein belongs to the DNA mismatch repair MutS family.

Functionally, this protein is involved in the repair of mismatches in DNA. It is possible that it carries out the mismatch recognition step. This protein has a weak ATPase activity. This chain is DNA mismatch repair protein MutS, found in Geotalea uraniireducens (strain Rf4) (Geobacter uraniireducens).